Here is a 148-residue protein sequence, read N- to C-terminus: Large ribosomal subunit protein uL16 (148 aa).

The protein belongs to the universal ribosomal protein uL16 family. As to quaternary structure, part of the 50S ribosomal subunit.

Binds 23S rRNA and is also seen to make contacts with the A and possibly P site tRNAs. In Gloeobacter violaceus (strain ATCC 29082 / PCC 7421), this protein is Large ribosomal subunit protein uL16.